The primary structure comprises 90 residues: METTENTKKIGKREFVGIVTSDKMNKTIVVEVRTKKLHKLYKKYVSSSKKYKAHDEENTAHIGDTVRIVEHKPISKDKAWMLTEVIERAK.

It belongs to the universal ribosomal protein uS17 family. As to quaternary structure, part of the 30S ribosomal subunit.

Functionally, one of the primary rRNA binding proteins, it binds specifically to the 5'-end of 16S ribosomal RNA. This chain is Small ribosomal subunit protein uS17, found in Treponema denticola (strain ATCC 35405 / DSM 14222 / CIP 103919 / JCM 8153 / KCTC 15104).